The primary structure comprises 437 residues: ATP-dependent protease ATPase subunit HslU (437 aa).

Residues V18, 60-65, D250, E315, and R387 contribute to the ATP site; that span reads GVGKTE.

This sequence belongs to the ClpX chaperone family. HslU subfamily. As to quaternary structure, a double ring-shaped homohexamer of HslV is capped on each side by a ring-shaped HslU homohexamer. The assembly of the HslU/HslV complex is dependent on binding of ATP.

It is found in the cytoplasm. ATPase subunit of a proteasome-like degradation complex; this subunit has chaperone activity. The binding of ATP and its subsequent hydrolysis by HslU are essential for unfolding of protein substrates subsequently hydrolyzed by HslV. HslU recognizes the N-terminal part of its protein substrates and unfolds these before they are guided to HslV for hydrolysis. The sequence is that of ATP-dependent protease ATPase subunit HslU from Desulfovibrio desulfuricans (strain ATCC 27774 / DSM 6949 / MB).